The sequence spans 269 residues: Orotidine 5'-phosphate decarboxylase (269 aa).

Residue Lys92 is the Proton donor of the active site.

The protein belongs to the OMP decarboxylase family. Type 2 subfamily.

It catalyses the reaction orotidine 5'-phosphate + H(+) = UMP + CO2. The protein operates within pyrimidine metabolism; UMP biosynthesis via de novo pathway; UMP from orotate: step 2/2. This chain is Orotidine 5'-phosphate decarboxylase, found in Natronomonas pharaonis (strain ATCC 35678 / DSM 2160 / CIP 103997 / JCM 8858 / NBRC 14720 / NCIMB 2260 / Gabara) (Halobacterium pharaonis).